Consider the following 117-residue polypeptide: Large ribosomal subunit protein uL18 (117 aa).

It belongs to the universal ribosomal protein uL18 family. As to quaternary structure, part of the 50S ribosomal subunit; part of the 5S rRNA/L5/L18/L25 subcomplex. Contacts the 5S and 23S rRNAs.

Functionally, this is one of the proteins that bind and probably mediate the attachment of the 5S RNA into the large ribosomal subunit, where it forms part of the central protuberance. In Histophilus somni (strain 129Pt) (Haemophilus somnus), this protein is Large ribosomal subunit protein uL18.